A 417-amino-acid polypeptide reads, in one-letter code: Testis-specific Y-encoded-like protein 5 (417 aa).

Residues 1-25 (MSGRSRGRKSSRAKNRGKGRAKARV) show a composition bias toward basic residues. Disordered stretches follow at residues 1 to 55 (MSGR…QVQA), 93 to 112 (AAGD…AASL), 127 to 202 (GTVG…EGSM), and 391 to 417 (KGKE…SQSN). Residues 27–37 (PAPDDAPRDPD) are compositionally biased toward basic and acidic residues. The segment covering 93–103 (AAGDHGQAAAR) has biased composition (low complexity). Residues 182 to 191 (GEEKKEERDA) show a composition bias toward basic and acidic residues. Over residues 406 to 417 (METTQPGVSQSN) the composition is skewed to polar residues.

The protein belongs to the nucleosome assembly protein (NAP) family. As to quaternary structure, interacts with USP7.

Functionally, involved in modulation of cell growth and cellular response to gamma radiation probably via regulation of the Akt signaling pathway. Involved in regulation of p53/TP53. Suppresses p53/TP53 protein levels and promotes its ubiquitination; the function is dependent on USP7 and independent on MDM2. Proposed to displace p53/TP53 from interaction with USP7. The polypeptide is Testis-specific Y-encoded-like protein 5 (TSPYL5) (Homo sapiens (Human)).